Consider the following 515-residue polypeptide: Synaptic vesicular amine transporter (515 aa).

The Cytoplasmic segment spans residues 1–20 (MALSDLVLLRWLRDSRHSRK). Residues 21-41 (LILFIVFLALLLDNMLLTVVV) form a helical membrane-spanning segment. At 42-130 (PIIPSYLYSI…EDRDLLNENV (89 aa)) the chain is on the lumenal, vesicle side. N-linked (GlcNAc...) asparagine glycans are attached at residues Asn56, Asn80, Asn81, Asn89, and Asn111. Residues Cys118 and Cys325 are joined by a disulfide bond. A helical transmembrane segment spans residues 131–151 (QVGLLFASKATVQLLTNPFIG). Residues 152–160 (LLTNRIGYP) lie on the Cytoplasmic side of the membrane. The chain crosses the membrane as a helical span at residues 161 to 181 (IPMFAGFCIMFISTVMFAFSS). Residues 182–190 (SYAFLLIAR) lie on the Lumenal, vesicle side of the membrane. Residues 191–211 (SLQGIGSSCSSVAGMGMLASV) traverse the membrane as a helical segment. Residues 212-220 (YTDDEERGK) are Cytoplasmic-facing. The helical transmembrane segment at 221 to 243 (PMGIALGGLAMGVLVGPPFGSVL) threads the bilayer. Residues Leu229 and Val233 each contribute to the serotonin site. The Lumenal, vesicle portion of the chain corresponds to 244 to 249 (YEFVGK). Residues 250–272 (TAPFLVLAALVLLDGAIQLFVLQ) traverse the membrane as a helical segment. Residues 273–292 (PSRVQPESQKGTPLTTLLKD) are Cytoplasmic-facing. Residues 293 to 312 (PYILIAAGSICFANMGIAML) traverse the membrane as a helical segment. Residues Asn306, Ile309, Glu313, Phe335, and Tyr342 each contribute to the serotonin site. The Lumenal, vesicle segment spans residues 313–329 (EPALPIWMMETMCSRKW). Residues 330–353 (QLGVAFLPASISYLIGTNIFGILA) form a helical membrane-spanning segment. The Cytoplasmic segment spans residues 354 to 358 (HKMGR). Residues 359–379 (WLCALLGMVIVGISILCIPFA) traverse the membrane as a helical segment. The Lumenal, vesicle portion of the chain corresponds to 380–390 (KNIYGLIAPNF). The chain crosses the membrane as a helical span at residues 391–411 (GVGFAIGMVDSSMMPIMGYLV). Asp400 is a serotonin binding site. Residues 412 to 415 (DLRH) are Cytoplasmic-facing. Residues 416–436 (VSVYGSVYAIADVAFCMGYAI) form a helical membrane-spanning segment. Residue Tyr434 coordinates serotonin. Residues 437–441 (GPSAG) are Lumenal, vesicle-facing. The chain crosses the membrane as a helical span at residues 442 to 463 (GAIAKAIGFPWLMTIIGIIDIA). Residues 464–515 (FAPLCFFLRSPPAKEEKMAILMDHNCPIKRKMYTQNNVQSYPIGDDEESESD) lie on the Cytoplasmic side of the membrane. Phosphoserine; by CK2 is present on residues Ser512 and Ser514.

The protein belongs to the major facilitator superfamily. Vesicular transporter family. In terms of assembly, interacts with SLC6A3. In terms of tissue distribution, expressed in the substantia nigra and the tuberomammillary nucleus of the posterior hypothalamus. Expressed in stomach, in particular in varicose nerve fibers and enterochromaffin-like cells in the corpus region (at protein level).

It is found in the cytoplasmic vesicle. The protein resides in the secretory vesicle. The protein localises to the synaptic vesicle membrane. It localises to the secretory vesicle membrane. Its subcellular location is the cell projection. It is found in the axon. The protein resides in the dendrite. It catalyses the reaction serotonin(in) + 2 H(+)(out) = serotonin(out) + 2 H(+)(in). It carries out the reaction dopamine(in) + 2 H(+)(out) = dopamine(out) + 2 H(+)(in). The enzyme catalyses histamine(in) + 2 H(+)(out) = histamine(out) + 2 H(+)(in). With respect to regulation, strongly inhibited by reserpine and tetrabenazine. Also inhibited to a lesser extent by ketanserin and fenfluramine. Reserpine and ketanserin inhibit by blocking the substrate-binding pocket. Tetrabenazine traps SLC18A2/VMAT2 in an occluded conformation and its inhibition is specific to SLC18A2/VMAT2 but not SLC18A1/VMAT1. Functionally, electrogenic antiporter that exchanges one cationic monoamine with two intravesicular protons across the membrane of secretory and synaptic vesicles. Uses the electrochemical proton gradient established by the V-type proton-pump ATPase to accumulate high concentrations of monoamines inside the vesicles prior to their release via exocytosis. Transports a variety of catecholamines such as dopamine, adrenaline and noradrenaline, histamine, and indolamines such as serotonin. Regulates the transvesicular monoaminergic gradient that determines the quantal size. Mediates somatodendritic dopamine release in hippocampal neurons, likely as part of a regulated secretory pathway that integrates retrograde synaptic signals. Acts as a primary transporter for striatal dopamine loading ensuring impulse-dependent release of dopamine at the synaptic cleft. Responsible for histamine and serotonin storage and subsequent corelease from mast cell granules. This Rattus norvegicus (Rat) protein is Synaptic vesicular amine transporter (Slc18a2).